Here is a 296-residue protein sequence, read N- to C-terminus: Nucleotide-binding protein SUB0630 (296 aa).

13–20 is a binding site for ATP; the sequence is GMSGAGKT. A GTP-binding site is contributed by 63–66; the sequence is DMRS.

This sequence belongs to the RapZ-like family.

Its function is as follows. Displays ATPase and GTPase activities. This Streptococcus uberis (strain ATCC BAA-854 / 0140J) protein is Nucleotide-binding protein SUB0630.